Consider the following 144-residue polypeptide: Large ribosomal subunit protein uL15 (144 aa).

The disordered stretch occupies residues 1-57; that stretch reads MELNNLKPAEGAKHAKRRVGRGIGSGLGKTAGRGHKGQKSRSGGFHKVGFEGGQMPL. Gly residues predominate over residues 21–31; that stretch reads RGIGSGLGKTA.

Belongs to the universal ribosomal protein uL15 family. Part of the 50S ribosomal subunit.

In terms of biological role, binds to the 23S rRNA. The sequence is that of Large ribosomal subunit protein uL15 from Paraburkholderia xenovorans (strain LB400).